Consider the following 291-residue polypeptide: Lactoylglutathione lyase (291 aa).

VOC domains lie at 24 to 149 and 155 to 283; these read RLLH…LIQR and PLCQ…LVDN. Positions 31, 82, and 96 each coordinate substrate. Residue histidine 96 is part of the active site. Glutamate 145 (proton donor/acceptor) is an active-site residue. Position 145 (glutamate 145) interacts with Ni(2+). Active-site residues include glutamine 158 and glutamate 209. A Ni(2+)-binding site is contributed by glutamate 209.

This sequence belongs to the glyoxalase I family. Monomer. It depends on Ni(2+) as a cofactor. Post-translationally, phosphorylated after gibberellin treatment. Expressed in callus, stem, leaves, panicles and maturing seeds (at protein level).

The catalysed reaction is (R)-S-lactoylglutathione = methylglyoxal + glutathione. Its pathway is secondary metabolite metabolism; methylglyoxal degradation; (R)-lactate from methylglyoxal: step 1/2. Its function is as follows. Catalyzes the conversion of hemimercaptal, formed from methylglyoxal and glutathione, to S-lactoylglutathione. Involved in the detoxifiation of methylglyoxal. Can functionally complement growth defect of a yeast mutant lacking GLY I. Involved in abiotic stress response. Over-expression of GLYI-11 in tobacco increases tolerance to osmotic, oxidative and salt stresses. The polypeptide is Lactoylglutathione lyase (Oryza sativa subsp. japonica (Rice)).